A 437-amino-acid chain; its full sequence is Adenylosuccinate synthetase (437 aa).

Residues 12–18 (GDEGKGK) and 40–42 (GHT) contribute to the GTP site. The Proton acceptor role is filled by D13. Residues D13 and G40 each coordinate Mg(2+). IMP contacts are provided by residues 13–16 (DEGK), 38–41 (NAGH), T131, R145, Q226, T241, and R305. Residue H41 is the Proton donor of the active site. A substrate-binding site is contributed by 301 to 307 (ATTGRRR). Residues R307, 333–335 (KLD), and 415–417 (SVG) contribute to the GTP site.

This sequence belongs to the adenylosuccinate synthetase family. In terms of assembly, homodimer. It depends on Mg(2+) as a cofactor.

It is found in the cytoplasm. It catalyses the reaction IMP + L-aspartate + GTP = N(6)-(1,2-dicarboxyethyl)-AMP + GDP + phosphate + 2 H(+). Its pathway is purine metabolism; AMP biosynthesis via de novo pathway; AMP from IMP: step 1/2. Its function is as follows. Plays an important role in the de novo pathway of purine nucleotide biosynthesis. Catalyzes the first committed step in the biosynthesis of AMP from IMP. In Desulfotalea psychrophila (strain LSv54 / DSM 12343), this protein is Adenylosuccinate synthetase.